A 238-amino-acid polypeptide reads, in one-letter code: Ribonuclease PH (238 aa).

Residues Arg-86 and 124 to 126 contribute to the phosphate site; that span reads GTR.

This sequence belongs to the RNase PH family. As to quaternary structure, homohexameric ring arranged as a trimer of dimers.

It catalyses the reaction tRNA(n+1) + phosphate = tRNA(n) + a ribonucleoside 5'-diphosphate. Phosphorolytic 3'-5' exoribonuclease that plays an important role in tRNA 3'-end maturation. Removes nucleotide residues following the 3'-CCA terminus of tRNAs; can also add nucleotides to the ends of RNA molecules by using nucleoside diphosphates as substrates, but this may not be physiologically important. Probably plays a role in initiation of 16S rRNA degradation (leading to ribosome degradation) during starvation. This chain is Ribonuclease PH, found in Brucella anthropi (strain ATCC 49188 / DSM 6882 / CCUG 24695 / JCM 21032 / LMG 3331 / NBRC 15819 / NCTC 12168 / Alc 37) (Ochrobactrum anthropi).